The sequence spans 149 residues: Ribosome maturation factor RimP (149 aa).

This sequence belongs to the RimP family.

Its subcellular location is the cytoplasm. Required for maturation of 30S ribosomal subunits. The protein is Ribosome maturation factor RimP of Neisseria gonorrhoeae (strain NCCP11945).